We begin with the raw amino-acid sequence, 105 residues long: Iron-sulfur cluster assembly protein CyaY (105 aa).

This sequence belongs to the frataxin family.

Involved in iron-sulfur (Fe-S) cluster assembly. May act as a regulator of Fe-S biogenesis. This chain is Iron-sulfur cluster assembly protein CyaY, found in Photobacterium profundum (strain SS9).